Here is a 286-residue protein sequence, read N- to C-terminus: 4-diphosphocytidyl-2-C-methyl-D-erythritol kinase (286 aa).

Lys-11 is an active-site residue. 93–103 (PFGAGLGGGSS) contacts ATP. Residue Asp-135 is part of the active site.

The protein belongs to the GHMP kinase family. IspE subfamily.

The catalysed reaction is 4-CDP-2-C-methyl-D-erythritol + ATP = 4-CDP-2-C-methyl-D-erythritol 2-phosphate + ADP + H(+). It participates in isoprenoid biosynthesis; isopentenyl diphosphate biosynthesis via DXP pathway; isopentenyl diphosphate from 1-deoxy-D-xylulose 5-phosphate: step 3/6. In terms of biological role, catalyzes the phosphorylation of the position 2 hydroxy group of 4-diphosphocytidyl-2C-methyl-D-erythritol. The chain is 4-diphosphocytidyl-2-C-methyl-D-erythritol kinase from Prosthecochloris aestuarii (strain DSM 271 / SK 413).